A 348-amino-acid chain; its full sequence is Phenylalanine--tRNA ligase alpha subunit (348 aa).

Glu259 lines the Mg(2+) pocket.

It belongs to the class-II aminoacyl-tRNA synthetase family. Phe-tRNA synthetase alpha subunit type 1 subfamily. In terms of assembly, tetramer of two alpha and two beta subunits. It depends on Mg(2+) as a cofactor.

The protein localises to the cytoplasm. The catalysed reaction is tRNA(Phe) + L-phenylalanine + ATP = L-phenylalanyl-tRNA(Phe) + AMP + diphosphate + H(+). This Limosilactobacillus reuteri (strain DSM 20016) (Lactobacillus reuteri) protein is Phenylalanine--tRNA ligase alpha subunit.